We begin with the raw amino-acid sequence, 96 residues long: Protein Vpr (96 aa).

The segment at 1–42 (MEQAPEDQGPQREPYNEWTLELLRKLKSEAVRHFPRIWLHGL) is homooligomerization. Ser-79, Ser-94, and Ser-96 each carry phosphoserine; by host.

The protein belongs to the HIV-1 VPR protein family. In terms of assembly, homooligomer, may form homodimer. Interacts with p6-gag region of the Pr55 Gag precursor protein through a (Leu-X-X)4 motif near the C-terminus of the P6gag protein. Interacts with host UNG. May interact with host RAD23A/HHR23A. Interacts with host VPRBP/DCAF1, leading to hijack the CUL4A-RBX1-DDB1-DCAF1/VPRBP complex, mediating ubiquitination of host proteins such as TERT and ZGPAT and arrest of the cell cycle in G2 phase. In terms of processing, phosphorylated on several residues by host. These phosphorylations regulate VPR activity for the nuclear import of the HIV-1 pre-integration complex.

It is found in the virion. It localises to the host nucleus. Its subcellular location is the host extracellular space. Its function is as follows. During virus replication, may deplete host UNG protein, and incude G2-M cell cycle arrest. Acts by targeting specific host proteins for degradation by the 26S proteasome, through association with the cellular CUL4A-DDB1 E3 ligase complex by direct interaction with host VPRPB/DCAF-1. Cell cycle arrest reportedly occurs within hours of infection and is not blocked by antiviral agents, suggesting that it is initiated by the VPR carried into the virion. Additionally, VPR induces apoptosis in a cell cycle dependent manner suggesting that these two effects are mechanistically linked. Detected in the serum and cerebrospinal fluid of AIDS patient, VPR may also induce cell death to bystander cells. During virus entry, plays a role in the transport of the viral pre-integration (PIC) complex to the host nucleus. This function is crucial for viral infection of non-dividing macrophages. May act directly at the nuclear pore complex, by binding nucleoporins phenylalanine-glycine (FG)-repeat regions. This is Protein Vpr from Homo sapiens (Human).